Here is a 346-residue protein sequence, read N- to C-terminus: 4-hydroxy-2-oxovalerate aldolase 2 (346 aa).

The Pyruvate carboxyltransferase domain occupies 8–260; sequence VTVHDMTLRD…ETGVDVFKIQ (253 aa). 16–17 serves as a coordination point for substrate; the sequence is RD. Residue D17 coordinates Mn(2+). H20 (proton acceptor) is an active-site residue. S170 and H199 together coordinate substrate. The Mn(2+) site is built by H199 and H201. Y290 provides a ligand contact to substrate.

It belongs to the 4-hydroxy-2-oxovalerate aldolase family.

It carries out the reaction (S)-4-hydroxy-2-oxopentanoate = acetaldehyde + pyruvate. This is 4-hydroxy-2-oxovalerate aldolase 2 (bphX3) from Metapseudomonas furukawaii (Pseudomonas furukawaii).